The sequence spans 520 residues: Poly(A)-specific ribonuclease PNLDC1 (520 aa).

Residues aspartate 17, glutamate 19, aspartate 260, and aspartate 354 each contribute to the Mg(2+) site. The helical transmembrane segment at 497–513 threads the bilayer; it reads CLLQVCGIVTAWALLAF.

This sequence belongs to the CAF1 family. It depends on Mg(2+) as a cofactor.

The protein localises to the endoplasmic reticulum membrane. It catalyses the reaction Exonucleolytic cleavage of poly(A) to 5'-AMP.. Functionally, 3'-exoribonuclease that has a preference for poly(A) tails of mRNAs, thereby efficiently degrading poly(A) tails. Exonucleolytic degradation of the poly(A) tail is often the first step in the decay of eukaryotic mRNAs and is also used to silence certain maternal mRNAs translationally during oocyte maturation and early embryonic development. May act as a regulator of multipotency in embryonic stem cells. Is a critical factor for proper spermatogenesis, involved in pre-piRNAs processing to generate mature piRNAs. The protein is Poly(A)-specific ribonuclease PNLDC1 of Pongo abelii (Sumatran orangutan).